A 1052-amino-acid polypeptide reads, in one-letter code: Focal adhesion kinase 1 (1052 aa).

The disordered stretch occupies residues 1-27 (MAAAYLDPNLNHTPSSSTKTHLGTGME). An N-acetylalanine modification is found at A2. Y5 carries the phosphotyrosine modification. Polar residues predominate over residues 10–21 (LNHTPSSSTKTH). T13 bears the Phosphothreonine mark. Phosphoserine is present on residues S29 and S54. In terms of domain architecture, FERM spans 35-355 (RVLKVFHYFE…GYCRLVNGAT (321 aa)). A Glycyl lysine isopeptide (Lys-Gly) (interchain with G-Cter in SUMO) cross-link involves residue K152. A phosphotyrosine mark is found at Y397 and Y407. Y397 carries the post-translational modification Phosphotyrosine; by autocatalysis. ATP-binding positions include 428-434 (IGEGQFG), K454, and 500-502 (ELC). The Protein kinase domain maps to 431-680 (GQFGDVHQGV…ELKAQLSTIL (250 aa)). D546 functions as the Proton acceptor in the catalytic mechanism. Y570 carries the phosphotyrosine modification. Residues Y576 and Y577 each carry the phosphotyrosine; by RET and SRC modification. The residue at position 580 (S580) is a Phosphoserine. Residues 685 to 697 (VQQEERMRMESRR) are compositionally biased toward basic and acidic residues. Disordered regions lie at residues 685–734 (VQQE…PSPQ) and 837–921 (VRLS…DRSN). The segment at 707 to 1052 (GSDEAPPKPS…LKMLGQTRPH (346 aa)) is interaction with TGFB1I1. Phosphoserine is present on S722. Phosphoserine; by CDK5 is present on S732. The span at 837 to 849 (VRLSRGSIDREDG) shows a compositional bias: basic and acidic residues. Position 843 is a phosphoserine (S843). The residue at position 861 (Y861) is a Phosphotyrosine. Over residues 869–880 (PAAPPKKPPRPG) the composition is skewed to pro residues. Positions 886 to 896 (SNLSSISSPAD) are enriched in polar residues. S910 carries the phosphoserine modification. The interval 912 to 1052 (PPTANLDRSN…LKMLGQTRPH (141 aa)) is interaction with ARHGEF28. T914 is modified (phosphothreonine). At Y925 the chain carries Phosphotyrosine; by SRC.

Belongs to the protein kinase superfamily. Tyr protein kinase family. FAK subfamily. In terms of assembly, interacts with GIT1. Component of a complex that contains at least FER, CTTN and PTK2/FAK1. Interacts with BMX. Interacts with STEAP4. Interacts with ZFYVE21. Interacts with ESR1. Interacts with FGR, FLT4 and RET. Interacts with EPHA2 in resting cells; activation of EPHA2 recruits PTPN11, leading to dephosphorylation of PTK2/FAK1 and dissociation of the complex. Interacts with EPHA1 (kinase activity-dependent). Interacts with MISP. Interacts with PIAS1. Interacts with ARHGAP26 and SHC1. Interacts with RB1CC1; this inhibits PTK2/FAK1 activity and activation of downstream signaling pathways. Interacts with P53/TP53. Interacts with STAT1. Interacts with WASL. Interacts with ARHGEF7. Interacts with DCC. Interacts (via first Pro-rich region) with CAS family members (via SH3 domain), including BCAR1, BCAR3 and CASS4. Interacts with NEDD9 (via C-terminus). Interacts with SORBS1. Interacts with ARHGEF28. Interacts with SHB. Part of a complex composed of THSD1, PTK2/FAK1, TLN1 and VCL. Interacts with PXN and TLN1. Interacts with TGFB1I1. Interacts with PIK3R1 or PIK3R2. Interacts with SRC, GRB2 and GRB7. Interacts with LPXN (via LD motif 3). Interacts with CD36. Interacts with EMP2; regulates PTK2 activation and localization. Interacts with DSCAM. Interacts with AMBRA1. Interacts (when tyrosine-phosphorylated) with tensin TNS1; the interaction is increased by phosphorylation of TNS1. Phosphorylated on tyrosine residues upon activation, e.g. upon integrin signaling. Tyr-397 is the major autophosphorylation site, but other kinases can also phosphorylate this residue. Phosphorylation at Tyr-397 promotes interaction with SRC and SRC family members, leading to phosphorylation at Tyr-576, Tyr-577 and at additional tyrosine residues. FGR promotes phosphorylation at Tyr-397 and Tyr-576. FER promotes phosphorylation at Tyr-577, Tyr-861 and Tyr-925, even when cells are not adherent. Tyr-397, Tyr-576 and Ser-722 are phosphorylated only when cells are adherent. Phosphorylation at Tyr-397 is important for interaction with BMX, PIK3R1 and SHC1. Phosphorylation at Tyr-925 is important for interaction with GRB2. Dephosphorylated by PTPN11; PTPN11 is recruited to PTK2 via EPHA2 (tyrosine phosphorylated). Microtubule-induced dephosphorylation at Tyr-397 is crucial for the induction of focal adhesion disassembly; this dephosphorylation could be catalyzed by PTPN11 and regulated by ZFYVE21. Phosphorylation on tyrosine residues is enhanced by NTN1. Post-translationally, sumoylated; this enhances autophosphorylation.

It is found in the cell junction. It localises to the focal adhesion. The protein resides in the cell membrane. Its subcellular location is the cytoplasm. The protein localises to the perinuclear region. It is found in the cell cortex. It localises to the cytoskeleton. The protein resides in the microtubule organizing center. Its subcellular location is the centrosome. The protein localises to the nucleus. It is found in the cilium basal body. The enzyme catalyses L-tyrosyl-[protein] + ATP = O-phospho-L-tyrosyl-[protein] + ADP + H(+). Subject to autoinhibition, mediated by interactions between the FERM domain and the kinase domain. Activated by autophosphorylation at Tyr-397. This promotes interaction with SRC and phosphorylation at Tyr-576 and Tyr-577 in the kinase activation loop by SRC. Phosphorylation at Tyr-397, Tyr-576 and Tyr-577 is required for maximal kinase activity. Its function is as follows. Non-receptor protein-tyrosine kinase that plays an essential role in regulating cell migration, adhesion, spreading, reorganization of the actin cytoskeleton, formation and disassembly of focal adhesions and cell protrusions, cell cycle progression, cell proliferation and apoptosis. Required for early embryonic development and placenta development. Required for embryonic angiogenesis, normal cardiomyocyte migration and proliferation, and normal heart development. Regulates axon growth and neuronal cell migration, axon branching and synapse formation; required for normal development of the nervous system. Plays a role in osteogenesis and differentiation of osteoblasts. Functions in integrin signal transduction, but also in signaling downstream of numerous growth factor receptors, G-protein coupled receptors (GPCR), EPHA2, netrin receptors and LDL receptors. Forms multisubunit signaling complexes with SRC and SRC family members upon activation; this leads to the phosphorylation of additional tyrosine residues, creating binding sites for scaffold proteins, effectors and substrates. Regulates numerous signaling pathways. Promotes activation of phosphatidylinositol 3-kinase and the AKT1 signaling cascade. Promotes activation of MAPK1/ERK2, MAPK3/ERK1 and the MAP kinase signaling cascade. Promotes localized and transient activation of guanine nucleotide exchange factors (GEFs) and GTPase-activating proteins (GAPs), and thereby modulates the activity of Rho family GTPases. Signaling via CAS family members mediates activation of RAC1. Phosphorylates NEDD9 following integrin stimulation. Recruits the ubiquitin ligase MDM2 to P53/TP53 in the nucleus, and thereby regulates P53/TP53 activity, P53/TP53 ubiquitination and proteasomal degradation. Phosphorylates SRC; this increases SRC kinase activity. Phosphorylates ACTN1, ARHGEF7, GRB7, RET and WASL. Promotes phosphorylation of PXN and STAT1; most likely PXN and STAT1 are phosphorylated by a SRC family kinase that is recruited to autophosphorylated PTK2/FAK1, rather than by PTK2/FAK1 itself. Promotes phosphorylation of BCAR1; GIT2 and SHC1; this requires both SRC and PTK2/FAK1. Promotes phosphorylation of BMX and PIK3R1. Functionally, does not contain a kinase domain and inhibits PTK2/FAK1 phosphorylation and signaling. Its enhanced expression can attenuate the nuclear accumulation of LPXN and limit its ability to enhance serum response factor (SRF)-dependent gene transcription. The sequence is that of Focal adhesion kinase 1 from Mus musculus (Mouse).